Reading from the N-terminus, the 341-residue chain is Serpentine receptor class epsilon-8 (341 aa).

7 consecutive transmembrane segments (helical) span residues 37 to 57 (VGFLVFSWIEFLYLFYLFIFI), 64 to 86 (LTFLFMNYGGQYFCSMLSRCIIV), 101 to 123 (WILVANFARTVCLFIAMYILPIF), 143 to 163 (IWVSLMILSIFHPLVFASAIA), 169 to 189 (IPVVVHVISFFIVNIIGYIGI), 235 to 255 (VQISILFFNIGCCSILLMDHF), and 264 to 284 (WSYVCFNFFALVYGITVPIIL).

The protein belongs to the nematode receptor-like protein sre family.

Its subcellular location is the membrane. The polypeptide is Serpentine receptor class epsilon-8 (sre-8) (Caenorhabditis elegans).